We begin with the raw amino-acid sequence, 417 residues long: NADH-quinone oxidoreductase subunit D (417 aa).

This sequence belongs to the complex I 49 kDa subunit family. In terms of assembly, NDH-1 is composed of 14 different subunits. Subunits NuoB, C, D, E, F, and G constitute the peripheral sector of the complex.

The protein resides in the cell inner membrane. It carries out the reaction a quinone + NADH + 5 H(+)(in) = a quinol + NAD(+) + 4 H(+)(out). Its function is as follows. NDH-1 shuttles electrons from NADH, via FMN and iron-sulfur (Fe-S) centers, to quinones in the respiratory chain. The immediate electron acceptor for the enzyme in this species is believed to be ubiquinone. Couples the redox reaction to proton translocation (for every two electrons transferred, four hydrogen ions are translocated across the cytoplasmic membrane), and thus conserves the redox energy in a proton gradient. The chain is NADH-quinone oxidoreductase subunit D from Legionella pneumophila subsp. pneumophila (strain Philadelphia 1 / ATCC 33152 / DSM 7513).